The chain runs to 636 residues: Chaperone protein DnaK (636 aa).

A Phosphothreonine; by autocatalysis modification is found at Thr198. The tract at residues 602–636 (QAEGAQPGGEAAGEASAKDEKVVDADFEEVKDDKK) is disordered. The span at 626–636 (ADFEEVKDDKK) shows a compositional bias: acidic residues.

This sequence belongs to the heat shock protein 70 family.

In terms of biological role, acts as a chaperone. This chain is Chaperone protein DnaK, found in Geobacter sulfurreducens (strain ATCC 51573 / DSM 12127 / PCA).